A 138-amino-acid polypeptide reads, in one-letter code: Dehydratase iacD (138 aa).

In terms of domain architecture, EthD spans 18–113; the sequence is GVSEEDFIEW…LKDQDVWMDN (96 aa).

The protein belongs to the tpcK family.

It functions in the pathway secondary metabolite biosynthesis. Dehydratase; part of the gene cluster that mediates the biosynthesis of iso-A82775C, a enylepoxycyclohexane and biosynthetic precursor of the chloropestolide anticancer natural products. Within the cluster, the prenyltransferase iacE prenylates siccayne to generate pestalodiol E, using dimethylallyl diphosphate (DMAPP) as cosubstrate. The probable oxidoreductase iacF is then involved in the epoxidation of pestalodiol F to pestalodiol F, which is further converted to pestalofone A by the short-chain dehydrogenase/reductase iacG. Iso-A82775C is subsequently generated from pestalofone A by the short-chain dehydrogenase/reductase iacC. Iso-A82775C is further condensed with maldoxin via a Diels-Alder reaction to produce the anticancer natural products chloropestolides A to E. The sequence is that of Dehydratase iacD from Pestalotiopsis fici (strain W106-1 / CGMCC3.15140).